The following is a 419-amino-acid chain: Light-independent protochlorophyllide reductase subunit N (419 aa).

Cys17, Cys42, and Cys103 together coordinate [4Fe-4S] cluster.

This sequence belongs to the BchN/ChlN family. As to quaternary structure, protochlorophyllide reductase is composed of three subunits; ChlL, ChlN and ChlB. Forms a heterotetramer of two ChlB and two ChlN subunits. It depends on [4Fe-4S] cluster as a cofactor.

It carries out the reaction chlorophyllide a + oxidized 2[4Fe-4S]-[ferredoxin] + 2 ADP + 2 phosphate = protochlorophyllide a + reduced 2[4Fe-4S]-[ferredoxin] + 2 ATP + 2 H2O. Its pathway is porphyrin-containing compound metabolism; chlorophyll biosynthesis (light-independent). In terms of biological role, component of the dark-operative protochlorophyllide reductase (DPOR) that uses Mg-ATP and reduced ferredoxin to reduce ring D of protochlorophyllide (Pchlide) to form chlorophyllide a (Chlide). This reaction is light-independent. The NB-protein (ChlN-ChlB) is the catalytic component of the complex. The sequence is that of Light-independent protochlorophyllide reductase subunit N from Prochlorococcus marinus (strain NATL1A).